The sequence spans 328 residues: uncharacterized protein (328 aa).

A disordered region spans residues 296–328; the sequence is APEGDLEDEIIEVDPEQPRDDPYRRLRTPPPGG. Acidic residues predominate over residues 299-310; sequence GDLEDEIIEVDP.

In terms of biological role, possibly necessary for replication. This is an uncharacterized protein from Halobacterium sp. (strain GN101).